Reading from the N-terminus, the 926-residue chain is Mating-type protein A-alpha Y3 (926 aa).

A DNA-binding region (homeobox) is located at residues 147–206 (YKKPRPKFHSEYTPLLELYFHFNAYPTFADRRMLAEKTGMQTRQITVWFQNHRRRAKGPL). 4 disordered regions span residues 238-281 (SHLR…KVGK), 308-374 (QQAP…TSSA), 424-452 (GKGKPSQNLTSTPATFSTVPPRRTSSRLN), and 625-734 (RARK…MNES). Composition is skewed to basic and acidic residues over residues 267 to 281 (KKPDGDKEALRKVGK) and 326 to 338 (NAQDVEMRDATKS). Residues 428 to 441 (PSQNLTSTPATFST) are compositionally biased toward polar residues. Residues 632 to 660 (KQAEKEARKEEKRARKEAKQAKKDRKEQR) are compositionally biased toward basic and acidic residues. 2 stretches are compositionally biased toward low complexity: residues 669–687 (STLDSSRASSVTSDASATS) and 699–724 (SSASSVASARTPSLSSTSSRRSSGTS).

It is found in the nucleus. Its function is as follows. Specifies A-alpha-3 mating-type. May regulate the expression of genes specific to the homokaryotic cell type. The sequence is that of Mating-type protein A-alpha Y3 from Schizophyllum commune (Split gill fungus).